The sequence spans 151 residues: Large ribosomal subunit protein uL15 (151 aa).

Residues 1–57 are disordered; the sequence is MTLRLDSLKSNKGARRRKLRKGRGIAAGQGASCGFGMRGQKSRSGRPTRPGFEGGQM. Over residues 12 to 23 the composition is skewed to basic residues; sequence KGARRRKLRKGR. Residues 25-37 show a composition bias toward gly residues; the sequence is IAAGQGASCGFGM.

It belongs to the universal ribosomal protein uL15 family. Part of the 50S ribosomal subunit.

Functionally, binds to the 23S rRNA. In Synechococcus sp. (strain CC9605), this protein is Large ribosomal subunit protein uL15.